The chain runs to 245 residues: Biosynthetic peptidoglycan transglycosylase (245 aa).

A helical membrane pass occupies residues 29–49 (IVLAVLIVLILPYALIVFYLL).

It belongs to the glycosyltransferase 51 family.

It is found in the cell inner membrane. The enzyme catalyses [GlcNAc-(1-&gt;4)-Mur2Ac(oyl-L-Ala-gamma-D-Glu-L-Lys-D-Ala-D-Ala)](n)-di-trans,octa-cis-undecaprenyl diphosphate + beta-D-GlcNAc-(1-&gt;4)-Mur2Ac(oyl-L-Ala-gamma-D-Glu-L-Lys-D-Ala-D-Ala)-di-trans,octa-cis-undecaprenyl diphosphate = [GlcNAc-(1-&gt;4)-Mur2Ac(oyl-L-Ala-gamma-D-Glu-L-Lys-D-Ala-D-Ala)](n+1)-di-trans,octa-cis-undecaprenyl diphosphate + di-trans,octa-cis-undecaprenyl diphosphate + H(+). The protein operates within cell wall biogenesis; peptidoglycan biosynthesis. Its function is as follows. Peptidoglycan polymerase that catalyzes glycan chain elongation from lipid-linked precursors. This chain is Biosynthetic peptidoglycan transglycosylase, found in Rhizobium johnstonii (strain DSM 114642 / LMG 32736 / 3841) (Rhizobium leguminosarum bv. viciae).